We begin with the raw amino-acid sequence, 177 residues long: MSRVGKSPITVPKGAEISINGANITVKGPLGTLTHNLHPSVGLKQEDGVLTVVLNNDSPEAGAQSGTARALVNNMVVGVTTGFERKLSLVGVGYRAAAQGETLKLQLGFSHDIIYNLPKGVKAETPSQTEIIIKGSNKQQVGQVAAEVRAYRSPEPYKGKGVRYVDEVVHLKETKKK.

Belongs to the universal ribosomal protein uL6 family. Part of the 50S ribosomal subunit.

This protein binds to the 23S rRNA, and is important in its secondary structure. It is located near the subunit interface in the base of the L7/L12 stalk, and near the tRNA binding site of the peptidyltransferase center. This Polynucleobacter necessarius subsp. necessarius (strain STIR1) protein is Large ribosomal subunit protein uL6.